A 98-amino-acid polypeptide reads, in one-letter code: NADH-ubiquinone oxidoreductase chain 4L (98 aa).

3 helical membrane-spanning segments follow: residues 1–21 (MTPTHMNITLAFTISLLGMLI), 26–46 (LMASLLCLEGMMMSLFIMTAV), and 61–81 (IIMLVFAACEAAVGLALLVSI).

This sequence belongs to the complex I subunit 4L family. In terms of assembly, core subunit of respiratory chain NADH dehydrogenase (Complex I) which is composed of 45 different subunits.

The protein localises to the mitochondrion inner membrane. It carries out the reaction a ubiquinone + NADH + 5 H(+)(in) = a ubiquinol + NAD(+) + 4 H(+)(out). Its function is as follows. Core subunit of the mitochondrial membrane respiratory chain NADH dehydrogenase (Complex I) which catalyzes electron transfer from NADH through the respiratory chain, using ubiquinone as an electron acceptor. Part of the enzyme membrane arm which is embedded in the lipid bilayer and involved in proton translocation. In Papio hamadryas (Hamadryas baboon), this protein is NADH-ubiquinone oxidoreductase chain 4L (MT-ND4L).